The chain runs to 156 residues: Succinate dehydrogenase assembly factor 2-B, mitochondrial (156 aa).

Residues 1–12 (MLRQILSSAVAK) constitute a mitochondrion transit peptide.

Belongs to the SDHAF2 family. In terms of assembly, interacts with the flavoprotein subunit within the SDH catalytic dimer.

The protein resides in the mitochondrion matrix. Plays an essential role in the assembly of succinate dehydrogenase (SDH), an enzyme complex (also referred to as respiratory complex II) that is a component of both the tricarboxylic acid (TCA) cycle and the mitochondrial electron transport chain, and which couples the oxidation of succinate to fumarate with the reduction of ubiquinone (coenzyme Q) to ubiquinol. Required for flavinylation (covalent attachment of FAD) of the flavoprotein subunit of the SDH catalytic dimer. In Drosophila willistoni (Fruit fly), this protein is Succinate dehydrogenase assembly factor 2-B, mitochondrial.